The sequence spans 213 residues: Ripening-related protein 3 (213 aa).

Positions 1 to 32 (MAGAMTMSRRRLSHALLLVLAILPNLAALAVA) are cleaved as a signal peptide.

It belongs to the kiwellin family.

It localises to the secreted. The polypeptide is Ripening-related protein 3 (Oryza sativa subsp. japonica (Rice)).